We begin with the raw amino-acid sequence, 186 residues long: Ribosome-recycling factor (186 aa).

A disordered region spans residues 144-163 (EKDGVIGQDESRAQSERVQK).

Belongs to the RRF family.

It localises to the cytoplasm. Its function is as follows. Responsible for the release of ribosomes from messenger RNA at the termination of protein biosynthesis. May increase the efficiency of translation by recycling ribosomes from one round of translation to another. The chain is Ribosome-recycling factor from Rhizobium johnstonii (strain DSM 114642 / LMG 32736 / 3841) (Rhizobium leguminosarum bv. viciae).